The primary structure comprises 429 residues: Glutamate-1-semialdehyde 2,1-aminomutase (429 aa).

The residue at position 267 (K267) is an N6-(pyridoxal phosphate)lysine.

Belongs to the class-III pyridoxal-phosphate-dependent aminotransferase family. HemL subfamily. Homodimer. The cofactor is pyridoxal 5'-phosphate.

It is found in the cytoplasm. It catalyses the reaction (S)-4-amino-5-oxopentanoate = 5-aminolevulinate. The protein operates within porphyrin-containing compound metabolism; protoporphyrin-IX biosynthesis; 5-aminolevulinate from L-glutamyl-tRNA(Glu): step 2/2. The sequence is that of Glutamate-1-semialdehyde 2,1-aminomutase from Xanthomonas euvesicatoria pv. vesicatoria (strain 85-10) (Xanthomonas campestris pv. vesicatoria).